The chain runs to 360 residues: Outer mitochondrial transmembrane helix translocase (360 aa).

At 1–15 (MVHGEAFSRPLSRNE) the chain is on the mitochondrial intermembrane side. The chain crosses the membrane as a helical span at residues 16–34 (VVGLIFRLTIFGAVTYFTI). Over 35–360 (KWMVDAIDPT…QNVLMHVSLD (326 aa)) the chain is Cytoplasmic. 133-140 (GPPGCGKT) is an ATP binding site.

Belongs to the AAA ATPase family. MSP1 subfamily.

It is found in the mitochondrion outer membrane. The protein resides in the peroxisome membrane. It localises to the postsynaptic cell membrane. It carries out the reaction [protein]-with a C-terminal TM segment(out) + ATP + H2O = [protein]-with a C-terminal TM segment(in) + ADP + phosphate + H(+). Functionally, outer mitochondrial translocase required to remove mislocalized tail-anchored transmembrane proteins on mitochondria. Specifically recognizes and binds tail-anchored transmembrane proteins: acts as a dislocase that mediates the ATP-dependent extraction of mistargeted tail-anchored transmembrane proteins from the mitochondrion outer membrane. Also plays a critical role in regulating the surface expression of AMPA receptors (AMPAR), thereby regulating synaptic plasticity and learning and memory. The sequence is that of Outer mitochondrial transmembrane helix translocase from Xenopus tropicalis (Western clawed frog).